Reading from the N-terminus, the 504-residue chain is Argininosuccinate lyase 2 (504 aa).

This sequence belongs to the lyase 1 family. Argininosuccinate lyase subfamily.

The protein resides in the cytoplasm. The catalysed reaction is 2-(N(omega)-L-arginino)succinate = fumarate + L-arginine. It functions in the pathway amino-acid biosynthesis; L-arginine biosynthesis; L-arginine from L-ornithine and carbamoyl phosphate: step 3/3. The protein is Argininosuccinate lyase 2 of Agrobacterium fabrum (strain C58 / ATCC 33970) (Agrobacterium tumefaciens (strain C58)).